Consider the following 446-residue polypeptide: Putative ankyrin repeat protein L273 (446 aa).

ANK repeat units follow at residues 71-100 (NGEF…KSNM), 124-153 (DHNK…RMRP), 206-237 (TDIE…KILM), 245-277 (VWVS…KMHV), 303-332 (ELEY…NSYY), and 365-394 (YTDI…QQII).

This Acanthamoeba polyphaga (Amoeba) protein is Putative ankyrin repeat protein L273.